A 439-amino-acid polypeptide reads, in one-letter code: Histidinol dehydrogenase (439 aa).

Tyr125, Gln187, and Asn210 together coordinate NAD(+). Positions 233, 255, and 258 each coordinate substrate. Positions 255 and 258 each coordinate Zn(2+). Catalysis depends on proton acceptor residues Glu323 and His324. Residues His324, Asp357, Glu411, and His416 each coordinate substrate. Asp357 provides a ligand contact to Zn(2+). His416 contacts Zn(2+).

Belongs to the histidinol dehydrogenase family. It depends on Zn(2+) as a cofactor.

The enzyme catalyses L-histidinol + 2 NAD(+) + H2O = L-histidine + 2 NADH + 3 H(+). It participates in amino-acid biosynthesis; L-histidine biosynthesis; L-histidine from 5-phospho-alpha-D-ribose 1-diphosphate: step 9/9. Functionally, catalyzes the sequential NAD-dependent oxidations of L-histidinol to L-histidinaldehyde and then to L-histidine. The chain is Histidinol dehydrogenase from Symbiobacterium thermophilum (strain DSM 24528 / JCM 14929 / IAM 14863 / T).